Reading from the N-terminus, the 264-residue chain is Small ribosomal subunit protein uS2 (264 aa).

The tract at residues 228–264 is disordered; it reads QLDAEDDYEDYDGSEYDDDYEETEYTDAVIPDEETEE. Residues 230–264 show a composition bias toward acidic residues; sequence DAEDDYEDYDGSEYDDDYEETEYTDAVIPDEETEE.

This sequence belongs to the universal ribosomal protein uS2 family.

The polypeptide is Small ribosomal subunit protein uS2 (Nostoc punctiforme (strain ATCC 29133 / PCC 73102)).